Reading from the N-terminus, the 162-residue chain is NADH-quinone oxidoreductase subunit I (162 aa).

4Fe-4S ferredoxin-type domains are found at residues 52–82 and 93–122; these read LRRYPNGEERCIACKLCEAVCPAQAITIEAG and VRYDIDMVKCIYCGLCQEACPVDAIVEGPN. Residues cysteine 62, cysteine 65, cysteine 68, cysteine 72, cysteine 102, cysteine 105, cysteine 108, and cysteine 112 each coordinate [4Fe-4S] cluster.

The protein belongs to the complex I 23 kDa subunit family. NDH-1 is composed of 14 different subunits. Subunits NuoA, H, J, K, L, M, N constitute the membrane sector of the complex. [4Fe-4S] cluster serves as cofactor.

It is found in the cell inner membrane. The enzyme catalyses a quinone + NADH + 5 H(+)(in) = a quinol + NAD(+) + 4 H(+)(out). Functionally, NDH-1 shuttles electrons from NADH, via FMN and iron-sulfur (Fe-S) centers, to quinones in the respiratory chain. The immediate electron acceptor for the enzyme in this species is believed to be ubiquinone. Couples the redox reaction to proton translocation (for every two electrons transferred, four hydrogen ions are translocated across the cytoplasmic membrane), and thus conserves the redox energy in a proton gradient. This Bradyrhizobium sp. (strain ORS 278) protein is NADH-quinone oxidoreductase subunit I.